The following is a 209-amino-acid chain: Abscisic acid receptor PYL5 (209 aa).

The tract at residues 44–196 (HAPGEHQCSS…NLTSLAEVSE (153 aa)) is START-like. A disulfide bridge links Cys51 with Cys177. Residues Lys80, 109 to 114 (ATTSTE), 136 to 142 (RLRNYSS), and Glu161 contribute to the abscisate site. The short motif at 105–109 (TGLPA) is the Gate loop element. A Latch loop motif is present at residues 135–137 (HRL).

It belongs to the PYR/PYL/RCAR abscisic acid intracellular receptor family. In terms of assembly, monomer. Interacts with PP2C30. Binding to PP2C30 is dependent on the presence of abscisic acid (ABA). Interacts with PP2C51. Binding to PP2C51 is dependent on the presence of ABA. Interacts with PP2C50. Binding to PP2C50 is dependent on the presence of ABA. Interacts with PP2C53. In terms of tissue distribution, expressed in leaf sheaths and leaf blades. Expressed at low levels in roots, flowers and seeds.

It localises to the nucleus. The protein localises to the cytoplasm. Its subcellular location is the cytosol. In terms of biological role, intracellular abscisic acid (ABA) receptor that functions as a positive regulator of ABA signaling pathway. Together with ABI5, PP2C30 and SAPK2, is part of an ABA signaling unit that modulates seed germination and early seedling growth. Acts as a positive regulator of abiotic stress-responsive gene expression. Inhibits the protein phosphatases PP2C06 and PP2C09 when activated by ABA. This chain is Abscisic acid receptor PYL5, found in Oryza sativa subsp. japonica (Rice).